The primary structure comprises 476 residues: Glycogen synthase (476 aa).

Lysine 15 is a binding site for ADP-alpha-D-glucose.

The protein belongs to the glycosyltransferase 1 family. Bacterial/plant glycogen synthase subfamily.

The catalysed reaction is [(1-&gt;4)-alpha-D-glucosyl](n) + ADP-alpha-D-glucose = [(1-&gt;4)-alpha-D-glucosyl](n+1) + ADP + H(+). It participates in glycan biosynthesis; glycogen biosynthesis. Synthesizes alpha-1,4-glucan chains using ADP-glucose. The polypeptide is Glycogen synthase (Bacillus cereus (strain B4264)).